A 457-amino-acid polypeptide reads, in one-letter code: tRNA modification GTPase MnmE (457 aa).

The (6S)-5-formyl-5,6,7,8-tetrahydrofolate site is built by Arg-24, Glu-81, and Lys-124. One can recognise a TrmE-type G domain in the interval 220 to 379 (GIQLVLAGAP…LKQKILHVVG (160 aa)). Asn-230 contributes to the K(+) binding site. GTP contacts are provided by residues 230–235 (NVGKSS), 249–255 (TPIAGTT), and 274–277 (DTAG). A Mg(2+)-binding site is contributed by Ser-234. Thr-249, Ile-251, and Thr-254 together coordinate K(+). Thr-255 serves as a coordination point for Mg(2+). Lys-457 contributes to the (6S)-5-formyl-5,6,7,8-tetrahydrofolate binding site.

It belongs to the TRAFAC class TrmE-Era-EngA-EngB-Septin-like GTPase superfamily. TrmE GTPase family. As to quaternary structure, homodimer. Heterotetramer of two MnmE and two MnmG subunits. K(+) serves as cofactor.

It is found in the cytoplasm. Exhibits a very high intrinsic GTPase hydrolysis rate. Involved in the addition of a carboxymethylaminomethyl (cmnm) group at the wobble position (U34) of certain tRNAs, forming tRNA-cmnm(5)s(2)U34. This chain is tRNA modification GTPase MnmE, found in Polynucleobacter asymbioticus (strain DSM 18221 / CIP 109841 / QLW-P1DMWA-1) (Polynucleobacter necessarius subsp. asymbioticus).